Here is a 129-residue protein sequence, read N- to C-terminus: Sm-like protein LSM4 (129 aa).

The region spanning 2–75 (LPLSLLKTAQ…IKYLRVPDEV (74 aa)) is the Sm domain. Residues 79–90 (VQEEKTRTDRKP) are compositionally biased toward basic and acidic residues. A disordered region spans residues 79–129 (VQEEKTRTDRKPPGVGRGRGRGVDDGGARGRGRGTSMGKMGGNRGAGRGRG). A compositionally biased stretch (gly residues) spans 111–129 (RGTSMGKMGGNRGAGRGRG).

It belongs to the snRNP Sm proteins family. In terms of assembly, component of the heptameric LSM1-LSM7 complex that forms a seven-membered ring structure with a donut shape. The LSM subunits are arranged in the order LSM1, LSM2, LSM3, LSM6, LSM5, LSM7 and LSM4. LSM4 subunit interacts only with its two neighboring subunits, LSM1A or LSM1B and LSM7. Component of the heptameric LSM2-LSM8 complex that forms a seven-membered ring structure with a donut shape. The LSM subunits are arranged in the order LSM8, LSM2, LSM3, LSM6, LSM5, LSM7 and LSM4. LSM4 subunit interacts only with its two neighboring subunits, LSM8 and LSM7. Post-translationally, methylated by PMRT15/SKB1 in response to salt stress or abscisic acid (ABA) treatment. In terms of tissue distribution, expressed in roots, leaves, stems, flowers and siliques.

The protein localises to the cytoplasm. Its subcellular location is the nucleus. Functionally, component of LSM protein complexes, which are involved in RNA processing. Component of the cytoplasmic LSM1-LSM7 complex which is involved in mRNA degradation by promoting decapping and leading to accurate 5'-3' mRNA decay. The cytoplasmic LSM1-LSM7 complex regulates developmental gene expression by the decapping of specific development-related transcripts. Component of the nuclear LSM2-LSM8 complex which is involved splicing nuclear mRNAs. LSM2-LSM8 binds directly to the U6 small nuclear RNAs (snRNAs) and is essential for accurate splicing of selected development-related mRNAs through the stabilization of the spliceosomal U6 snRNA. Plays a critical role in the regulation of development-related gene expression. The protein is Sm-like protein LSM4 of Arabidopsis thaliana (Mouse-ear cress).